The primary structure comprises 708 residues: DNA ligase 2 (708 aa).

Residues 71 to 75 (DADYD), 121 to 122 (SL), and E153 each bind NAD(+). K155 acts as the N6-AMP-lysine intermediate in catalysis. Positions 176, 213, 330, and 354 each coordinate NAD(+). Positions 448, 451, 466, and 471 each coordinate Zn(2+). Residues 627-708 (ADAGTLAGKE…LLRLAEAAPE (82 aa)) enclose the BRCT domain.

This sequence belongs to the NAD-dependent DNA ligase family. LigA subfamily. Mg(2+) serves as cofactor. The cofactor is Mn(2+).

The enzyme catalyses NAD(+) + (deoxyribonucleotide)n-3'-hydroxyl + 5'-phospho-(deoxyribonucleotide)m = (deoxyribonucleotide)n+m + AMP + beta-nicotinamide D-nucleotide.. Its function is as follows. DNA ligase that catalyzes the formation of phosphodiester linkages between 5'-phosphoryl and 3'-hydroxyl groups in double-stranded DNA using NAD as a coenzyme and as the energy source for the reaction. It is essential for DNA replication and repair of damaged DNA. This Opitutus terrae (strain DSM 11246 / JCM 15787 / PB90-1) protein is DNA ligase 2.